We begin with the raw amino-acid sequence, 361 residues long: Mitogen-activated protein kinase 14A (361 aa).

Residues 25-309 (YQNLSPVGSG…AAEALAHPYF (285 aa)) form the Protein kinase domain. ATP is bound by residues 31 to 39 (VGSGAYGSV) and K54. Catalysis depends on D169, which acts as the Proton acceptor. T181 carries the post-translational modification Phosphothreonine; by MAP2K3. The TXY signature appears at 181–183 (TGY). Y183 is modified (phosphotyrosine; by MAP2K3).

Belongs to the protein kinase superfamily. CMGC Ser/Thr protein kinase family. MAP kinase subfamily. Mg(2+) serves as cofactor. Post-translationally, dually phosphorylated on Thr-181 and Tyr-183, which activates the enzyme.

It localises to the cytoplasm. The protein localises to the nucleus. It carries out the reaction L-seryl-[protein] + ATP = O-phospho-L-seryl-[protein] + ADP + H(+). The enzyme catalyses L-threonyl-[protein] + ATP = O-phospho-L-threonyl-[protein] + ADP + H(+). Activated by threonine and tyrosine phosphorylation by the dual specificity kinase, MKK3. Functionally, serine/threonine kinase which acts as an essential component of the MAP kinase signal transduction pathway. Mapk14a is one of the four p38 MAPKs which play an important role in the cascades of cellular responses evoked by extracellular stimuli such as pro-inflammatory cytokines or physical stress leading to direct activation of transcription factors. Accordingly, p38 MAPKs phosphorylate a broad range of proteins and it has been estimated that they may have approximately 200 to 300 substrates each. Some of the targets are downstream kinases which are activated through phosphorylation and further phosphorylate additional targets. Required for cytokinesis on the future dorsal side of the blastodisc, suggesting a role in symmetrical and synchronous blastomere cleavage. This Danio rerio (Zebrafish) protein is Mitogen-activated protein kinase 14A (mapk14a).